Here is a 330-residue protein sequence, read N- to C-terminus: D-xylose-binding periplasmic protein (330 aa).

Positions 1 to 23 (MKIKNILLTLCTSLLLTNVAAHA) are cleaved as a signal peptide.

Belongs to the bacterial solute-binding protein 2 family.

Its subcellular location is the periplasm. In terms of biological role, involved in the high-affinity D-xylose membrane transport system. Binds with high affinity to xylose. In Escherichia coli (strain K12), this protein is D-xylose-binding periplasmic protein (xylF).